A 203-amino-acid chain; its full sequence is Small ribosomal subunit protein uS4 (203 aa).

In terms of domain architecture, S4 RNA-binding spans 93 to 153 (RRFDNVVFRA…QKSQNLDAVA (61 aa)).

This sequence belongs to the universal ribosomal protein uS4 family. Part of the 30S ribosomal subunit. Contacts protein S5. The interaction surface between S4 and S5 is involved in control of translational fidelity.

Its function is as follows. One of the primary rRNA binding proteins, it binds directly to 16S rRNA where it nucleates assembly of the body of the 30S subunit. Functionally, with S5 and S12 plays an important role in translational accuracy. The sequence is that of Small ribosomal subunit protein uS4 from Chlorobium phaeobacteroides (strain BS1).